A 357-amino-acid chain; its full sequence is NADH-quinone oxidoreductase subunit H (357 aa).

A run of 8 helical transmembrane segments spans residues 22–42, 94–114, 130–150, 164–184, 199–219, 254–274, 294–314, and 333–353; these read VAIILIIFIKAIALLIPLMLV, IYLFLLAPVLAIAPAIAVWAV, LLYVLAIGSIGVYGIILAGWA, AALLVSYEIVIGFALVTVVMI, GGIIYWYFIPLFPIMIIFFIS, FFLAEYANMILMAVLSVIMFF, IPGMIWLLAKTTFFMFLYLWV, and VFLPITIIWIFVVALMTQLQL.

It belongs to the complex I subunit 1 family. In terms of assembly, NDH-1 is composed of 14 different subunits. Subunits NuoA, H, J, K, L, M, N constitute the membrane sector of the complex.

It localises to the cell inner membrane. It carries out the reaction a quinone + NADH + 5 H(+)(in) = a quinol + NAD(+) + 4 H(+)(out). In terms of biological role, NDH-1 shuttles electrons from NADH, via FMN and iron-sulfur (Fe-S) centers, to quinones in the respiratory chain. The immediate electron acceptor for the enzyme in this species is believed to be ubiquinone. Couples the redox reaction to proton translocation (for every two electrons transferred, four hydrogen ions are translocated across the cytoplasmic membrane), and thus conserves the redox energy in a proton gradient. This subunit may bind ubiquinone. The sequence is that of NADH-quinone oxidoreductase subunit H from Vesicomyosocius okutanii subsp. Calyptogena okutanii (strain HA).